The sequence spans 305 residues: GTPase Era (305 aa).

Residues 11-181 (RSGFVSFVGR…IKVMTDLLPE (171 aa)) enclose the Era-type G domain. The interval 19 to 26 (GRPNTGKS) is G1. 19 to 26 (GRPNTGKS) serves as a coordination point for GTP. A G2 region spans residues 45 to 49 (ETTRH). The segment at 66–69 (DTPG) is G3. GTP is bound by residues 66-70 (DTPGL) and 130-133 (TKAD). The G4 stretch occupies residues 130 to 133 (TKAD). Residues 160 to 162 (VSS) are G5. The 80-residue stretch at 212-291 (LKNELPHSVA…FLDLRIKVLK (80 aa)) folds into the KH type-2 domain.

Belongs to the TRAFAC class TrmE-Era-EngA-EngB-Septin-like GTPase superfamily. Era GTPase family. Monomer.

It localises to the cytoplasm. Its subcellular location is the cell membrane. Its function is as follows. An essential GTPase that binds both GDP and GTP, with rapid nucleotide exchange. Plays a role in 16S rRNA processing and 30S ribosomal subunit biogenesis and possibly also in cell cycle regulation and energy metabolism. This is GTPase Era from Corynebacterium glutamicum (strain ATCC 13032 / DSM 20300 / JCM 1318 / BCRC 11384 / CCUG 27702 / LMG 3730 / NBRC 12168 / NCIMB 10025 / NRRL B-2784 / 534).